A 229-amino-acid polypeptide reads, in one-letter code: Large ribosomal subunit protein uL1 (229 aa).

Belongs to the universal ribosomal protein uL1 family. Part of the 50S ribosomal subunit.

Its function is as follows. Binds directly to 23S rRNA. The L1 stalk is quite mobile in the ribosome, and is involved in E site tRNA release. Protein L1 is also a translational repressor protein, it controls the translation of the L11 operon by binding to its mRNA. This is Large ribosomal subunit protein uL1 from Enterococcus faecalis (strain ATCC 700802 / V583).